Here is a 958-residue protein sequence, read N- to C-terminus: Transcription factor PfmaH (958 aa).

Positions 44–70 (CLNCSQAKTGCNKEVPCQRCQDKGLHC) form a DNA-binding region, zn(2)-C6 fungal-type. The disordered stretch occupies residues 272-301 (EFAGSPSGVSPFGDLSTSNSEPSSSSWGSS). Over residues 287–301 (STSNSEPSSSSWGSS) the composition is skewed to low complexity.

The protein localises to the nucleus. In terms of biological role, transcription factor; part of the gene cluster that mediates the biosynthesis of dihydroxynaphthalene (DHN)-melanin, a bluish-green pigment forming a dark layer in the conidial wall that protects the conidia from UV radiations. The 2 transcription factors present in the cluster, PfmaF and PfmaH, coordinately regulate DHN-melanin production. PfmaH acts as a pathway specific regulator to mediate the expression of Pfma cluster genes including PfmaJ, leading to DHN-melanin production in conidia, and regulates the conidial formation. The sequence is that of Transcription factor PfmaH (PfmaH) from Pestalotiopsis fici (strain W106-1 / CGMCC3.15140).